A 156-amino-acid polypeptide reads, in one-letter code: Cyanate hydratase (156 aa).

Active-site residues include arginine 96, glutamate 99, and serine 122.

It belongs to the cyanase family.

The enzyme catalyses cyanate + hydrogencarbonate + 3 H(+) = NH4(+) + 2 CO2. Catalyzes the reaction of cyanate with bicarbonate to produce ammonia and carbon dioxide. This chain is Cyanate hydratase, found in Escherichia coli (strain K12 / DH10B).